The chain runs to 636 residues: Threonine--tRNA ligase (636 aa).

Residues 1–61 (MINITLPDGK…ETDASVVFIT (61 aa)) enclose the TGS domain. A catalytic region spans residues 238 to 528 (DHRKLGTALD…LIEHYAGKFP (291 aa)). The Zn(2+) site is built by Cys-329, His-380, and His-505.

The protein belongs to the class-II aminoacyl-tRNA synthetase family. In terms of assembly, homodimer. It depends on Zn(2+) as a cofactor.

It is found in the cytoplasm. It catalyses the reaction tRNA(Thr) + L-threonine + ATP = L-threonyl-tRNA(Thr) + AMP + diphosphate + H(+). Its function is as follows. Catalyzes the attachment of threonine to tRNA(Thr) in a two-step reaction: L-threonine is first activated by ATP to form Thr-AMP and then transferred to the acceptor end of tRNA(Thr). Also edits incorrectly charged L-seryl-tRNA(Thr). The polypeptide is Threonine--tRNA ligase (Desulfatibacillum aliphaticivorans).